The following is a 126-amino-acid chain: uncharacterized protein (126 aa).

Composition is skewed to basic residues over residues 21–31 (RKKRKKRKKRR) and 41–83 (RILK…RKRR). The segment at 21 to 83 (RKKRKKRKKR…RSPRKRRKRR (63 aa)) is disordered.

This is an uncharacterized protein from Saccharomyces cerevisiae (strain ATCC 204508 / S288c) (Baker's yeast).